The following is a 379-amino-acid chain: MNTPRIIVAMSGGVDSSVAAWRLNSQREAIAGLFMRNWTDDGNGQCHAEEDRRDAVAVCGILGIAFHFRDFSHEYWQEVFTHFLAEYANGRTPNPDVLCNREIKFKHFLETARELGADRIATGHYARIEHYRQRWHLLRGADRSKDQSYFLHQLGQEQLAATLFPIGDLEKQQLRQLAHQTGLPTHAKKDSTGICFIGERNFREFLKQYLPAQPGEIRDPQEQRIAEHPGVFYFTLGQRQGLNIGGVRNRPPSPWYVIGKDLATNVLYVDQHRDSPFLQSRWLRSEPAHWVSGSPPAPTFTCTAQTRYRQADEPCKVTVRNDGSLDVDFTRTQWAVTPGQSLVLYDGNECLGGAVIATTDAPLERKRARNLSKTENVLQ.

Residues 9–16 (AMSGGVDS) and M35 contribute to the ATP site. Residues 94-96 (NPD) form an interaction with target base in tRNA region. The active-site Nucleophile is the C99. A disulfide bridge links C99 with C195. An ATP-binding site is contributed by G123. Residues 145–147 (KDQ) are interaction with tRNA. C195 acts as the Cysteine persulfide intermediate in catalysis. Residues 307–308 (RY) form an interaction with tRNA region.

Belongs to the MnmA/TRMU family.

It localises to the cytoplasm. It catalyses the reaction S-sulfanyl-L-cysteinyl-[protein] + uridine(34) in tRNA + AH2 + ATP = 2-thiouridine(34) in tRNA + L-cysteinyl-[protein] + A + AMP + diphosphate + H(+). Catalyzes the 2-thiolation of uridine at the wobble position (U34) of tRNA, leading to the formation of s(2)U34. The sequence is that of tRNA-specific 2-thiouridylase MnmA from Xylella fastidiosa (strain M23).